The following is a 127-amino-acid chain: Ribonuclease P protein component (127 aa).

The protein belongs to the RnpA family. In terms of assembly, consists of a catalytic RNA component (M1 or rnpB) and a protein subunit.

The enzyme catalyses Endonucleolytic cleavage of RNA, removing 5'-extranucleotides from tRNA precursor.. In terms of biological role, RNaseP catalyzes the removal of the 5'-leader sequence from pre-tRNA to produce the mature 5'-terminus. It can also cleave other RNA substrates such as 4.5S RNA. The protein component plays an auxiliary but essential role in vivo by binding to the 5'-leader sequence and broadening the substrate specificity of the ribozyme. The sequence is that of Ribonuclease P protein component from Corynebacterium urealyticum (strain ATCC 43042 / DSM 7109).